The following is a 363-amino-acid chain: Spermidine/putrescine import ATP-binding protein PotA (363 aa).

An ABC transporter domain is found at 9–239 (IDVRNAVKRY…PANRFVADFI (231 aa)). 41–48 (GPSGCGKT) serves as a coordination point for ATP.

It belongs to the ABC transporter superfamily. Spermidine/putrescine importer (TC 3.A.1.11.1) family. The complex is composed of two ATP-binding proteins (PotA), two transmembrane proteins (PotB and PotC) and a solute-binding protein (PotD).

It localises to the cell inner membrane. The catalysed reaction is ATP + H2O + polyamine-[polyamine-binding protein]Side 1 = ADP + phosphate + polyamineSide 2 + [polyamine-binding protein]Side 1.. In terms of biological role, part of the ABC transporter complex PotABCD involved in spermidine/putrescine import. Responsible for energy coupling to the transport system. In Roseobacter denitrificans (strain ATCC 33942 / OCh 114) (Erythrobacter sp. (strain OCh 114)), this protein is Spermidine/putrescine import ATP-binding protein PotA.